The following is a 192-amino-acid chain: Superoxide dismutase [Fe] (192 aa).

Fe cation is bound by residues His27, His74, Asp157, and His161.

This sequence belongs to the iron/manganese superoxide dismutase family. As to quaternary structure, homodimer. Fe cation serves as cofactor.

It catalyses the reaction 2 superoxide + 2 H(+) = H2O2 + O2. Functionally, destroys superoxide anion radicals which are normally produced within the cells and which are toxic to biological systems. The polypeptide is Superoxide dismutase [Fe] (sodB) (Legionella pneumophila subsp. pneumophila (strain Philadelphia 1 / ATCC 33152 / DSM 7513)).